The sequence spans 2647 residues: MSSSHSRAGQSAAGAAPGGGVDTRDAEMPATEKDLAEDAPWKKIQQNTFTRWCNEHLKCVSKRIANLQTDLSDGLRLIALLEVLSQKKMHRKHNQRPTFRQMQLENVSVALEFLDRESIKLVSIDSKAIVDGNLKLILGLIWTLILHYSISMPMWDEEEDEEAKKQTPKQRLLGWIQNKLPQLPITNFSRDWQSGRALGALVDSCAPGLCPDWDSWDASKPVTNAREAMQQADDWLGIPQVITPEEIVDPNVDEHSVMTYLSQFPKAKLKPGAPLRPKLNPKKARAYGPGIEPTGNMVKKRAEFTVETRSAGQGEVLVYVEDPAGHQEEAKVTANNDKNRTFSVWYVPEVTGTHKVTVLFAGQHIAKSPFEVYVDKSQGDASKVTAQGPGLEPSGNIANKTTYFEIFTAGAGTGEVEVVIQDPMGQKGTVEPQLEARGDSTYRCSYQPTMEGVHTVHVTFAGVPIPRSPYTVTVGQACNPSACRAVGRGLQPKGVRVKETADFKVYTKGAGSGELKVTVKGPKGEERVKQKDLGDGVYGFEYYPMVPGTYIVTITWGGQNIGRSPFEVKVGTECGNQKVRAWGPGLEGGVVGKSADFVVEAIGDDVGTLGFSVEGPSQAKIECDDKGDGSCDVRYWPQEAGEYAVHVLCNSEDIRLSPFMADIRDAPQDFHPDRVKARGPGLEKTGVAVNKPAEFTVDAKHGGKAPLRVQVQDNEGCPVEALVKDNGNGTYSCSYVPRKPVKHTAMVSWGGVSIPNSPFRVNVGAGSHPNKVKVYGPGVAKTGLKAHEPTYFTVDCAEAGQGDVSIGIKCAPGVVGPAEADIDFDIIRNDNDTFTVKYTPRGAGSYTIMVLFADQATPTSPIRVKVEPSHDASKVKAEGPGLSRTGVELGKPTHFTVNAKAAGKGKLDVQFSGLTKGDAVRDVDIIDHHDNTYTVKYTPVQQGPVGVNVTYGGDPIPKSPFSVAVSPSLDLSKIKVSGLGEKVDVGKDQEFTVKSKGAGGQGKVASKIVGPSGAAVPCKVEPGLGADNSVVRFLPREEGPYEVEVTYDGVPVPGSPFPLEAVAPTKPSKVKAFGPGLQGGSAGSPARFTIDTKGAGTGGLGLTVEGPCEAQLECLDNGDGTCSVSYVPTEPGDYNINILFADTHIPGSPFKAHVVPCFDASKVKCSGPGLERATAGEVGQFQVDCSSAGSAELTIEICSEAGLPAEVYIQDHGDGTHTITYIPLCPGAYTVTIKYGGQPVPNFPSKLQVEPAVDTSGVQCYGPGIEGQGVFREATTEFSVDARALTQTGGPHVKARVANPSGNLTETYVQDRGDGMYKVEYTPYEEGLHSVDVTYDGSPVPSSPFQVPVTEGCDPSRVRVHGPGIQSGTTNKPNKFTVETRGAGTGGLGLAVEGPSEAKMSCMDNKDGSCSVEYIPYEAGTYSLNVTYGGHQVPGSPFKVPVHDVTDASKVKCSGPGLSPGMVRANLPQSFQVDTSKAGVAPLQVKVQGPKGLVEPVDVVDNADGTQTVNYVPSREGPYSISVLYGDEEVPRSPFKVKVLPTHDASKVKASGPGLNTTGVPASLPVEFTIDAKDAGEGLLAVQITDPEGKPKKTHIQDNHDGTYTVAYVPDVTGRYTILIKYGGDEIPFSPYRVRAVPTGDASKCTVTVSIGGHGLGAGIGPTIQIGEETVITVDTKAAGKGKVTCTVCTPDGSEVDVDVVENEDGTFDIFYTAPQPGKYVICVRFGGEHVPNSPFQVTALAGDQPSVQPPLRSQQLAPQYTYAQGGQQTWAPERPLVGVNGLDVTSLRPFDLVIPFTIKKGEITGEVRMPSGKVAQPTITDNKDGTVTVRYAPSEAGLHEMDIRYDNMHIPGSPLQFYVDYVNCGHVTAYGPGLTHGVVNKPATFTVNTKDAGEGGLSLAIEGPSKAEISCTDNQDGTCSVSYLPVLPGDYSILVKYNEQHVPGSPFTARVTGDDSMRMSHLKVGSAADIPINISETDLSLLTATVVPPSGREEPCLLKRLRNGHVGISFVPKETGEHLVHVKKNGQHVASSPIPVVISQSEIGDASRVRVSGQGLHEGHTFEPAEFIIDTRDAGYGGLSLSIEGPSKVDINTEDLEDGTCRVTYCPTEPGNYIINIKFADQHVPGSPFSVKVTGEGRVKESITRRRRAPSVANVGSHCDLSLKIPEISIQDMTAQVTSPSGKTHEAEIVEGENHTYCIRFVPAEMGTHTVSVKYKGQHVPGSPFQFTVGPLGEGGAHKVRAGGPGLERAEAGVPAEFSIWTREAGAGGLAIAVEGPSKAEISFEDRKDGSCGVAYVVQEPGDYEVSVKFNEEHIPDSPFVVPVASPSGDARRLTVSSLQESGLKVNQPASFAVSLNGAKGAIDAKVHSPSGALEECYVTEIDQDKYAVRFIPRENGVYLIDVKFNGTHIPGSPFKIRVGEPGHGGDPGLVSAYGAGLEGGVTGNPAEFVVNTSNAGAGALSVTIDGPSKVKMDCQECPEGYRVTYTPMAPGSYLISIKYGGPYHIGGSPFKAKVTGPRLVSNHSLHETSSVFVDSLTKATCAPQHGAPGPGPADASKVVAKGLGLSKAYVGQKSSFTVDCSKAGNNMLLVGVHGPRTPCEEILVKHVGSRLYSVSYLLKDKGEYTLVVKWGDEHIPGSPYRVVVP.

Residues 1–15 (MSSSHSRAGQSAAGA) are compositionally biased toward low complexity. A disordered region spans residues 1–39 (MSSSHSRAGQSAAGAAPGGGVDTRDAEMPATEKDLAEDA). Ser2 carries the post-translational modification N-acetylserine. Residues 2-274 (SSSHSRAGQS…PKAKLKPGAP (273 aa)) are actin-binding. Ser11 carries the post-translational modification Phosphoserine. Positions 22–39 (DTRDAEMPATEKDLAEDA) are enriched in basic and acidic residues. Glycyl lysine isopeptide (Lys-Gly) (interchain with G-Cter in ubiquitin) cross-links involve residues Lys42, Lys43, and Lys135. Calponin-homology (CH) domains lie at 43-149 (KIQQ…LHYS) and 166-269 (QTPK…KAKL). The disordered stretch occupies residues 271-294 (PGAPLRPKLNPKKARAYGPGIEPT). Filamin repeat units follow at residues 276–374 (RPKL…EVYV), 376–474 (KSQG…TVTV), 475–570 (GQAC…EVKV), 571–663 (GTEC…MADI), 667–763 (PQDF…RVNV), 764–866 (GAGS…RVKV), 867–965 (EPSH…SVAV), 966–1061 (SPSL…PLEA), 1062–1154 (VAPT…KAHV), 1155–1249 (VPCF…KLQV), 1250–1349 (EPAV…QVPV), 1350–1442 (TEGC…KVPV), 1443–1539 (HDVT…KVKV), 1540–1636 (LPTH…RVRA), and 1649–1740 (VSIG…QVTA). A Glycyl lysine isopeptide (Lys-Gly) (interchain with G-Cter in SUMO1); alternate cross-link involves residue Lys299. A Glycyl lysine isopeptide (Lys-Gly) (interchain with G-Cter in SUMO2); alternate cross-link involves residue Lys299. An N6-acetyllysine mark is found at Lys376 and Lys508. N6-acetyllysine occurs at positions 700, 781, 837, 865, and 906. Phosphoserine is present on residues Ser968 and Ser1055. Lys1071 carries the N6-acetyllysine; alternate modification. N6-succinyllysine; alternate is present on Lys1071. A phosphoserine mark is found at Ser1081 and Ser1084. Thr1089 carries the post-translational modification Phosphothreonine. Ser1301 and Ser1338 each carry phosphoserine. Residues 1361–1382 (HGPGIQSGTTNKPNKFTVETRG) form a disordered region. Residue Lys1372 is modified to N6-acetyllysine. Phosphoserine occurs at positions 1459 and 1533. The tract at residues 1490 to 1607 (PKGLVEPVDV…DNHDGTYTVA (118 aa)) is interaction with furin. Position 1538 is an N6-acetyllysine (Lys1538). Residues Ser1630 and Ser1734 each carry the phosphoserine modification. Positions 1741-1778 (LAGDQPSVQPPLRSQQLAPQYTYAQGGQQTWAPERPLV) are hinge 1. 8 Filamin repeats span residues 1779-1860 (GVNG…QFYV), 1861-1950 (DYVN…PFTA), 1951-2039 (RVTG…PVVI), 2042-2131 (SEIG…SPFS), 2132-2230 (VKVT…QFTV), 2233-2325 (LGEG…VVPV), 2327-2420 (SPSG…KIRV), and 2424-2516 (GHGG…KAKV). The residue at position 1835 (Ser1835) is a Phosphoserine. Phosphoserine occurs at positions 1967, 2053, 2128, 2152, 2158, 2163, 2180, 2284, 2327, and 2329. The residue at position 2336 (Thr2336) is a Phosphothreonine. Phosphoserine is present on residues Ser2338, Ser2370, Ser2414, Ser2510, Ser2523, and Ser2526. The segment at 2517-2551 (TGPRLVSNHSLHETSSVFVDSLTKATCAPQHGAPG) is hinge 2. The interval 2517–2647 (TGPRLVSNHS…PGSPYRVVVP (131 aa)) is self-association site, tail. One copy of the Filamin 24 repeat lies at 2552–2646 (PGPADASKVV…IPGSPYRVVV (95 aa)). An N6-acetyllysine; alternate modification is found at Lys2569. Lys2569 carries the post-translational modification N6-succinyllysine; alternate. Lys2575 is modified (N6-acetyllysine). Residue Thr2599 is modified to Phosphothreonine. 2 positions are modified to N6-acetyllysine: Lys2607 and Lys2621.

The protein belongs to the filamin family. As to quaternary structure, homodimer. Interacts with PDLIM2. Interacts with RFLNA and RFLNB. Interacts with FCGR1A, FLNB, FURIN, HSPB7, INPPL1, KCND2, MYOT, MYOZ1, ARHGAP24, PSEN1, PSEN2 and ECSCR. Also interacts with various other binding partners in addition to filamentous actin. Interacts (via N-terminus) with MIS18BP1 (via N-terminus). Interacts (via N-terminus) with TAF1B. Interacts with TMEM67 (via C-terminus) and MKS1. Interacts (via actin-binding domain) with MICALL2 (via CH domain). Interacts (via filamin repeat 5) with SYK; docks SYK to the plasma membrane. Interacts (via filamin repeats 19 and 21) with DRD3; increased PKA-mediated phosphorylation at Ser-2152. Interacts (via filamin repeat 21) with MAS1, AGTR1 and ADRA1D; increases PKA-mediated phosphorylation of FLNA at Ser-2152. Interacts (via filamin repeats 4, 9, 12, 17, 19, 21, and 23) with GP1BA (high affinity), ITGB7, ITGB2 and FBLIM1. Interacts with CEACAM1 (via cytoplasmic domain); inhibits cell migration and cell scattering by interfering with the interaction between FLNA and RALA. Interacts with FOXC1. Interacts (via calponin-homology (CH) domain 1 and filamin repeat 24) with CRMP1; the interaction alters FLNA ternary structure and thus promotes FLNA dissociation from F-actin. Interacts with DPYSL3/CRMP3 and DPYSL4/CRMP4. In terms of assembly, interacts with integrin ITGB1 isoform 1/beta-1A and isoform 5/beta-1D. Interacts with LUZP1; the interaction is not necessary for colocalization of LUZP1 with F-actin. Post-translationally, phosphorylation at Ser-2152 is negatively regulated by the autoinhibited conformation of filamin repeats 19-21. Ligand binding induces a conformational switch triggering phosphorylation at Ser-2152 by PKA. Phosphorylation extent changes in response to cell activation. In terms of processing, polyubiquitination in the CH1 domain by a SCF-like complex containing ASB2 leads to proteasomal degradation. Prior dissociation from actin may be required to expose the target lysines. Ubiquitinated in endothelial cells by RNF213 downstream of the non-canonical Wnt signaling pathway, leading to its degradation by the proteasome. Ubiquitous.

The protein localises to the cytoplasm. The protein resides in the cell cortex. Its subcellular location is the cytoskeleton. It localises to the perikaryon. It is found in the cell projection. The protein localises to the growth cone. The protein resides in the podosome. In terms of biological role, promotes orthogonal branching of actin filaments and links actin filaments to membrane glycoproteins. Anchors various transmembrane proteins to the actin cytoskeleton and serves as a scaffold for a wide range of cytoplasmic signaling proteins. Interaction with FLNB may allow neuroblast migration from the ventricular zone into the cortical plate. Tethers cell surface-localized furin, modulates its rate of internalization and directs its intracellular trafficking. Involved in ciliogenesis. Plays a role in cell-cell contacts and adherens junctions during the development of blood vessels, heart and brain organs. Plays a role in platelets morphology through interaction with SYK that regulates ITAM- and ITAM-like-containing receptor signaling, resulting in by platelet cytoskeleton organization maintenance. During the axon guidance process, required for growth cone collapse induced by SEMA3A-mediated stimulation of neurons. The chain is Filamin-A (FLNA) from Homo sapiens (Human).